The sequence spans 665 residues: GRB2-associated-binding protein 2 (665 aa).

The residue at position 2 (serine 2) is a Phosphoserine. Positions 8-119 (DVVCTGWLRK…WVQSICQICG (112 aa)) constitute a PH domain. The tract at residues 131-183 (RNLSSASHGPRSSPAEFSSSQHLLRERKSSAPSHSSQPTLFTFEPPMTSHMQP) is disordered. Phosphoserine is present on residues serine 135, serine 142, serine 143, serine 149, serine 150, serine 160, serine 165, serine 211, serine 220, and serine 261. Residues 160 to 170 (SAPSHSSQPTL) are compositionally biased toward polar residues. Phosphothreonine is present on threonine 262. The residue at position 263 (tyrosine 263) is a Phosphotyrosine. Residue threonine 275 is modified to Phosphothreonine. Phosphoserine is present on residues serine 278 and serine 282. Phosphothreonine is present on threonine 284. Residue tyrosine 290 is modified to Phosphotyrosine. The residue at position 328 (threonine 328) is a Phosphothreonine. 2 disordered regions span residues 340-442 (TSGD…ENYV) and 491-517 (PSRG…PTPL). The SH3-binding motif lies at 348-355 (PPPRPPKP). Position 365 is a phosphoserine (serine 365). Residues threonine 382 and threonine 388 each carry the phosphothreonine modification. Serine 402 is modified (phosphoserine). Threonine 405 is modified (phosphothreonine). Over residues 412-423 (GSGESASWSAES) the composition is skewed to low complexity. Phosphoserine is present on residues serine 420 and serine 423. Tyrosine 441 carries the post-translational modification Phosphotyrosine. The SH3-binding motif lies at 499–508 (PPPVNRNLKP). Serine 532 bears the Phosphoserine mark. Polar residues-rich tracts occupy residues 548-566 (SSSQ…STDS) and 578-600 (NPVS…STGS). A disordered region spans residues 548-631 (SSSQYCRPIS…SSVTSDEKVD (84 aa)). At serine 612 the chain carries Phosphoserine. Position 632 is a phosphotyrosine (tyrosine 632). Polar residues predominate over residues 646-659 (TMQEWTDVRQSSEP). A disordered region spans residues 646 to 665 (TMQEWTDVRQSSEPSKGAKL).

Belongs to the GAB family. In terms of assembly, part of a complex composed of EEIG1, TNFRSF11A/RANK, PLCG2, GAB2, TEC and BTK; complex formation increases in the presence of TNFSF11/RANKL. Interacts with HCK. Interacts with SHC1; may mediate interaction with receptors. Interacts with SYK. Interacts with PI-3 kinase. Interacts with GRB2 (via SH3 2 domain). Interacts (phosphorylated) with PTPN11. Interacts with TNFRSF11A (via cytoplasmic domain). Interacts (phosphorylated) with 14-3-3 family proteins SFN, YWHAB, YWHAE, YWHAG, YWHAH, YWHAQ and YWHAZ; prevents interaction with GRB2 and attenuates GAB2 signaling. Post-translationally, phosphorylated upon EGF stimulation. Phosphorylated on tyrosine residues by HCK upon IL6 signaling. Phosphorylated on tyrosine residue(s) by the thrombopoietin receptor (TPOR), stem cell factor receptor (SCFR), and T-cell and B-cell antigen receptors, gp130, IL-2R and IL-3R. Phosphorylated upon stimulation of TNFRSF11A/RANK by TNFSF11/RANKL. In terms of processing, dephosphorylated by PTPN11.

The protein localises to the cytoplasm. It localises to the cell membrane. It is found in the membrane raft. Adapter protein which acts downstream of several membrane receptors including cytokine, antigen, hormone, cell matrix and growth factor receptors to regulate multiple signaling pathways. Regulates osteoclast differentiation mediating the TNFRSF11A/RANK signaling. In allergic response, it plays a role in mast cells activation and degranulation through PI-3-kinase regulation. Also involved in the regulation of cell proliferation and hematopoiesis. The chain is GRB2-associated-binding protein 2 (Gab2) from Rattus norvegicus (Rat).